The sequence spans 680 residues: DNA-directed RNA polymerase subunit beta' (680 aa).

4 residues coordinate Zn(2+): cysteine 69, cysteine 71, cysteine 87, and cysteine 90. Aspartate 489, aspartate 491, and aspartate 493 together coordinate Mg(2+).

The protein belongs to the RNA polymerase beta' chain family. RpoC1 subfamily. In terms of assembly, in plastids the minimal PEP RNA polymerase catalytic core is composed of four subunits: alpha, beta, beta', and beta''. When a (nuclear-encoded) sigma factor is associated with the core the holoenzyme is formed, which can initiate transcription. Mg(2+) is required as a cofactor. Zn(2+) serves as cofactor.

The protein localises to the plastid. Its subcellular location is the chloroplast. The enzyme catalyses RNA(n) + a ribonucleoside 5'-triphosphate = RNA(n+1) + diphosphate. Functionally, DNA-dependent RNA polymerase catalyzes the transcription of DNA into RNA using the four ribonucleoside triphosphates as substrates. The protein is DNA-directed RNA polymerase subunit beta' of Barbarea verna (Land cress).